We begin with the raw amino-acid sequence, 321 residues long: uncharacterized protein (321 aa).

An N-acetylvaline modification is found at valine 2. Residues 37-63 (SEASRLLTPQTSSNHALSKMQKDDDIR) form a disordered region. The span at 43 to 52 (LTPQTSSNHA) shows a compositional bias: polar residues. Residue threonine 44 is modified to Phosphothreonine. A phosphoserine mark is found at serine 49, serine 69, serine 121, serine 126, serine 129, serine 137, and serine 139. Disordered stretches follow at residues 115 to 270 (KKQR…YSIS) and 283 to 321 (ETLE…AQPQ). 3 stretches are compositionally biased toward polar residues: residues 120–145 (KSIN…TSTD), 153–162 (KYSSSGTPEN), and 178–189 (SYGQMIKNNSNR). Threonine 159 carries the phosphothreonine modification. Residues 204–229 (EIDHTAPEKSEKRQERSGRSFDRQKS) show a composition bias toward basic and acidic residues. Residues 237 to 253 (LSRSISRGPTKNKTVSP) are compositionally biased toward polar residues. Phosphoserine is present on residues serine 238, serine 240, serine 242, and serine 270. The segment covering 284–305 (TLEEEQEDAEKEGVLMEDEGNE) has biased composition (acidic residues). Residues 306–315 (EYTKDLEEAA) are compositionally biased toward basic and acidic residues.

It localises to the cytoplasm. This is an uncharacterized protein from Saccharomyces cerevisiae (strain ATCC 204508 / S288c) (Baker's yeast).